The sequence spans 552 residues: Urocanate hydratase (552 aa).

Residues 49 to 50 (GG), glutamine 127, 173 to 175 (GMG), aspartate 193, 239 to 240 (NA), 260 to 264 (QTSAH), 270 to 271 (YI), and tyrosine 319 each bind NAD(+). Cysteine 407 is an active-site residue. Glycine 489 lines the NAD(+) pocket.

It belongs to the urocanase family. It depends on NAD(+) as a cofactor.

The protein localises to the cytoplasm. It catalyses the reaction 4-imidazolone-5-propanoate = trans-urocanate + H2O. It functions in the pathway amino-acid degradation; L-histidine degradation into L-glutamate; N-formimidoyl-L-glutamate from L-histidine: step 2/3. Functionally, catalyzes the conversion of urocanate to 4-imidazolone-5-propionate. The sequence is that of Urocanate hydratase from Bacillus cereus (strain ATCC 14579 / DSM 31 / CCUG 7414 / JCM 2152 / NBRC 15305 / NCIMB 9373 / NCTC 2599 / NRRL B-3711).